A 437-amino-acid polypeptide reads, in one-letter code: uncharacterized protein (437 aa).

This is an uncharacterized protein from Rhodococcus erythropolis (Arthrobacter picolinophilus).